The primary structure comprises 138 residues: Acidic phospholipase A2 Cvv-E6a (138 aa).

Residues 1–16 form the signal peptide; it reads MRTLWIVAVLLLGVEG. 7 cysteine pairs are disulfide-bonded: Cys-42–Cys-131, Cys-44–Cys-60, Cys-59–Cys-111, Cys-65–Cys-138, Cys-66–Cys-104, Cys-73–Cys-97, and Cys-91–Cys-102. Residues Tyr-43, Gly-45, and Gly-47 each coordinate Ca(2+). The active site involves His-63. Asp-64 contacts Ca(2+). The active site involves Asp-105.

This sequence belongs to the phospholipase A2 family. Group II subfamily. D49 sub-subfamily. It depends on Ca(2+) as a cofactor. As to expression, expressed by the venom gland.

Its subcellular location is the secreted. It carries out the reaction a 1,2-diacyl-sn-glycero-3-phosphocholine + H2O = a 1-acyl-sn-glycero-3-phosphocholine + a fatty acid + H(+). Its function is as follows. Snake venom phospholipase A2 (PLA2) that significantly inhibits ADP-induced platelet aggregation in platelet-rich plasma of human, rabbit and guinea pig. PLA2 catalyzes the calcium-dependent hydrolysis of the 2-acyl groups in 3-sn-phosphoglycerides. In Crotalus viridis viridis (Prairie rattlesnake), this protein is Acidic phospholipase A2 Cvv-E6a.